The following is a 329-amino-acid chain: MRTDWTREEIAALFDLPFDELMWEAQGVHRRHHARGEIQLCTLLSIKTGGCVEDCGYCSQSAHADTGLKATKLMDVRAVLQAAAQAKDAGSKRFCMGAAWRNPKDRDMPAIVEMIEGVRAMGMETCMTLGMLSKEQAQVLGMAGLDYYNHNIDTSPEHYGNVITTRSFQDRLDTLEEVRAAGINVCSGGIVGMGETRADRVGFIHTLATLPEHPGSVPINALVPVKGTVLGDMLADTPLAKIDDIEFVRTVAVARITMPKSMVRLSAGRESMSEATQALCFMAGANSIFTGDKLLTTANAGDNADAALFAKLGLRPMESEEPMRMEAAE.

Residues 36–260 (GEIQLCTLLS…VAVARITMPK (225 aa)) form the Radical SAM core domain. The [4Fe-4S] cluster site is built by cysteine 51, cysteine 55, and cysteine 58. Residues cysteine 95, cysteine 126, cysteine 186, and arginine 264 each contribute to the [2Fe-2S] cluster site.

The protein belongs to the radical SAM superfamily. Biotin synthase family. In terms of assembly, homodimer. It depends on [4Fe-4S] cluster as a cofactor. The cofactor is [2Fe-2S] cluster.

The catalysed reaction is (4R,5S)-dethiobiotin + (sulfur carrier)-SH + 2 reduced [2Fe-2S]-[ferredoxin] + 2 S-adenosyl-L-methionine = (sulfur carrier)-H + biotin + 2 5'-deoxyadenosine + 2 L-methionine + 2 oxidized [2Fe-2S]-[ferredoxin]. The protein operates within cofactor biosynthesis; biotin biosynthesis; biotin from 7,8-diaminononanoate: step 2/2. In terms of biological role, catalyzes the conversion of dethiobiotin (DTB) to biotin by the insertion of a sulfur atom into dethiobiotin via a radical-based mechanism. The chain is Biotin synthase from Sphingopyxis alaskensis (strain DSM 13593 / LMG 18877 / RB2256) (Sphingomonas alaskensis).